We begin with the raw amino-acid sequence, 259 residues long: UPF0246 protein Pfl01_0961 (259 aa).

Belongs to the UPF0246 family.

The sequence is that of UPF0246 protein Pfl01_0961 from Pseudomonas fluorescens (strain Pf0-1).